The sequence spans 183 residues: Probable actin-related protein 2/3 complex subunit 3 (183 aa).

This sequence belongs to the ARPC3 family. Component of the Arp2/3 complex.

It is found in the cytoplasm. It localises to the cytoskeleton. In terms of biological role, functions as a component of the Arp2/3 complex which is involved in regulation of actin polymerization and together with an activating nucleation-promoting factor (NPF) mediates the formation of branched actin networks. In Caenorhabditis elegans, this protein is Probable actin-related protein 2/3 complex subunit 3 (arx-5).